A 544-amino-acid chain; its full sequence is Chromosomal replication initiator protein DnaA (544 aa).

A domain I, interacts with DnaA modulators region spans residues 1–71 (MNDFWQHCSA…ADMARDFWHT (71 aa)). Residues 71–207 (TPIDVQFVLD…GETDSMYERS (137 aa)) are domain II. The span at 90–105 (AAAPAPASARPASAPG) shows a compositional bias: low complexity. Disordered stretches follow at residues 90 to 111 (AAAP…GGSA) and 180 to 203 (AAAR…TDSM). Polar residues predominate over residues 191–200 (SAGSNGNGET). The domain III, AAA+ region stretch occupies residues 208 to 424 (KLNPVLTFDN…GALRKILAYS (217 aa)). Gly-252, Gly-254, Lys-255, and Thr-256 together coordinate ATP. The tract at residues 425-544 (KFHGREITIE…LHVLEQTLKG (120 aa)) is domain IV, binds dsDNA.

It belongs to the DnaA family. Oligomerizes as a right-handed, spiral filament on DNA at oriC.

The protein localises to the cytoplasm. Its function is as follows. Plays an essential role in the initiation and regulation of chromosomal replication. ATP-DnaA binds to the origin of replication (oriC) to initiate formation of the DNA replication initiation complex once per cell cycle. Binds the DnaA box (a 9 base pair repeat at the origin) and separates the double-stranded (ds)DNA. Forms a right-handed helical filament on oriC DNA; dsDNA binds to the exterior of the filament while single-stranded (ss)DNA is stabiized in the filament's interior. The ATP-DnaA-oriC complex binds and stabilizes one strand of the AT-rich DNA unwinding element (DUE), permitting loading of DNA polymerase. After initiation quickly degrades to an ADP-DnaA complex that is not apt for DNA replication. Binds acidic phospholipids. The polypeptide is Chromosomal replication initiator protein DnaA (Paraburkholderia xenovorans (strain LB400)).